Here is a 142-residue protein sequence, read N- to C-terminus: Large ribosomal subunit protein uL13 (142 aa).

The protein belongs to the universal ribosomal protein uL13 family. In terms of assembly, part of the 50S ribosomal subunit.

Its function is as follows. This protein is one of the early assembly proteins of the 50S ribosomal subunit, although it is not seen to bind rRNA by itself. It is important during the early stages of 50S assembly. The sequence is that of Large ribosomal subunit protein uL13 from Pseudomonas putida (strain W619).